The following is a 152-amino-acid chain: Transcriptional regulator MraZ (152 aa).

SpoVT-AbrB domains are found at residues 5–52 (ASAI…PIHE) and 81–124 (AHEV…DEQS).

Belongs to the MraZ family. Forms oligomers.

It localises to the cytoplasm. The protein localises to the nucleoid. The sequence is that of Transcriptional regulator MraZ from Shewanella baltica (strain OS223).